Here is a 185-residue protein sequence, read N- to C-terminus: Shikimate kinase (185 aa).

Residue 21–26 participates in ATP binding; sequence GVGKTT. Thr-25 lines the Mg(2+) pocket. Asp-43, Arg-67, and Gly-90 together coordinate substrate. ATP is bound at residue Arg-129. Arg-147 contacts substrate.

Belongs to the shikimate kinase family. Monomer. Mg(2+) serves as cofactor.

It localises to the cytoplasm. It catalyses the reaction shikimate + ATP = 3-phosphoshikimate + ADP + H(+). Its pathway is metabolic intermediate biosynthesis; chorismate biosynthesis; chorismate from D-erythrose 4-phosphate and phosphoenolpyruvate: step 5/7. Catalyzes the specific phosphorylation of the 3-hydroxyl group of shikimic acid using ATP as a cosubstrate. This Bacillus pumilus (strain SAFR-032) protein is Shikimate kinase.